Consider the following 382-residue polypeptide: uncharacterized protein (382 aa).

Transmembrane regions (helical) follow at residues 14–34 (GLLL…LWLA), 45–65 (MVSS…GYLI), 79–99 (LVFA…SWMA), 102–122 (FVAG…LMCS), 131–151 (LLAA…LLVS), 157–177 (LMNV…PLLF), 204–224 (LGVN…GLMP), 236–256 (NIGF…WPIG), 265–285 (LLVL…MLTH), 289–309 (APAL…AMAW), 325–345 (ALLL…AMLM), and 349–369 (SDNL…LMLL).

It belongs to the major facilitator superfamily. YcaD (TC 2.A.1.26) family.

It is found in the cell inner membrane. This is an uncharacterized protein from Escherichia fergusonii (strain ATCC 35469 / DSM 13698 / CCUG 18766 / IAM 14443 / JCM 21226 / LMG 7866 / NBRC 102419 / NCTC 12128 / CDC 0568-73).